The following is a 399-amino-acid chain: [Pyruvate dehydrogenase (acetyl-transferring)] kinase, mitochondrial (399 aa).

Residues 1–18 (MFLTRRLLGPFTSAIARK) constitute a mitochondrion transit peptide. A Histidine kinase domain is found at 123–360 (VVETMAEGLI…DAMIFLKAIP (238 aa)). Residues 247-254 (ELFKNSMR), aspartate 286, 305-306 (ST), and 321-326 (GYGYGL) each bind ATP.

The protein belongs to the PDK/BCKDK protein kinase family.

Its subcellular location is the mitochondrion matrix. It catalyses the reaction L-seryl-[pyruvate dehydrogenase E1 alpha subunit] + ATP = O-phospho-L-seryl-[pyruvate dehydrogenase E1 alpha subunit] + ADP + H(+). Its function is as follows. Inhibits the mitochondrial pyruvate dehydrogenase complex by phosphorylation of the E1 alpha subunit, thus contributing to the regulation of glucose metabolism. The protein is [Pyruvate dehydrogenase (acetyl-transferring)] kinase, mitochondrial of Ascaris suum (Pig roundworm).